Consider the following 358-residue polypeptide: DNA integrity scanning protein DisA (358 aa).

The region spanning 6–144 is the DAC domain; the sequence is RPTLREAVAR…RGERHVLTDS (139 aa). ATP contacts are provided by residues glycine 73, leucine 91, and 104 to 108; that span reads TRHRS.

Belongs to the DisA family. In terms of assembly, homooctamer. It depends on Mg(2+) as a cofactor.

The enzyme catalyses 2 ATP = 3',3'-c-di-AMP + 2 diphosphate. Functionally, participates in a DNA-damage check-point. DisA forms globular foci that rapidly scan along the chromosomes searching for lesions. In terms of biological role, also has diadenylate cyclase activity, catalyzing the condensation of 2 ATP molecules into cyclic di-AMP (c-di-AMP). c-di-AMP likely acts as a signaling molecule that may couple DNA integrity with a cellular process. This chain is DNA integrity scanning protein DisA, found in Mycobacterium tuberculosis (strain ATCC 25177 / H37Ra).